A 169-amino-acid polypeptide reads, in one-letter code: Small ribosomal subunit protein bS18c (169 aa).

Residues 1–61 form a disordered region; the sequence is MYTSKQPFLK…RRPRIGPGDR (61 aa). The segment covering 27–55 has biased composition (basic residues); the sequence is QTFRKSKQTFRKFKQPFRKSKQPFRRRPR.

Belongs to the bacterial ribosomal protein bS18 family. As to quaternary structure, part of the 30S ribosomal subunit.

Its subcellular location is the plastid. It localises to the chloroplast. The chain is Small ribosomal subunit protein bS18c from Agrostis stolonifera (Creeping bentgrass).